Reading from the N-terminus, the 490-residue chain is ABC transporter ATP-binding protein ModF (490 aa).

ABC transporter domains follow at residues Leu-4–Glu-235 and Ile-261–Ile-489. Residues Gly-36–Ser-43 and Gly-293–Ser-300 each bind ATP.

The protein belongs to the ABC transporter superfamily.

It localises to the cell inner membrane. Functionally, probably not involved in the transport of molybdenum into the cell. The polypeptide is ABC transporter ATP-binding protein ModF (modF) (Escherichia coli (strain K12)).